A 28-amino-acid chain; its full sequence is N-acetyl-D-galactosamine-binding lectin subunit A (28 aa).

This sequence belongs to the ribosome-inactivating protein family. Disulfide-linked heterodimer of A and B chains.

It catalyses the reaction Endohydrolysis of the N-glycosidic bond at one specific adenosine on the 28S rRNA.. Gal / GalNAc-specific lectin. Agglutinates both native and trypsin-treated rabbit erythrocytes but not human erythrocytes irrespective of blood group type. The protein is N-acetyl-D-galactosamine-binding lectin subunit A of Iris hollandica (Dutch iris).